A 206-amino-acid chain; its full sequence is GTP-binding protein YPT1 (206 aa).

Residue Met1 is modified to N-acetylmethionine. GTP-binding positions include 17–23 (SGVGKSC), 33–40 (YTNDYIST), Gly66, and 121–124 (NKCD). Residue Cys23 is the site of S-palmitoyl cysteine attachment. An Effector region motif is present at residues 37–45 (YISTIGVDF). The interval 63–80 (DTAGQERFRTITSSYYRG) is interaction with GDI1. Cys123 is lipidated: S-palmitoyl cysteine. Lys144 participates in a covalent cross-link: Glycyl lysine isopeptide (Lys-Gly) (interchain with G-Cter in ubiquitin). 152-153 (AL) contacts GTP. Ser172 and Ser174 each carry phosphoserine. The disordered stretch occupies residues 173-206 (MSQQNLNETTQKKEDKGNVNLKGQSLTNTGGGCC). An interaction with GDI1 region spans residues 189 to 195 (GNVNLKG). Residues Cys205 and Cys206 are each lipidated (S-geranylgeranyl cysteine).

This sequence belongs to the small GTPase superfamily. Rab family. As to quaternary structure, forms a complex with the Rab escort protein (REP) MRS6, which is recognized by Rab geranylgeranyltransferase BET2-BET4. Interacts with the Rab GDP dissociation inhibitor GDI1, which can retrieve from and deliver to membranes the GDP-bound and prenylated form of YPT1. Interacts with YIP1, which is required for proper membrane targeting of prenylated YPT1. Interacts with YIF1, YIP3, YIP4 and YIP5. Prenylation is required for interaction with GDI1 and YIP1.

The protein localises to the endoplasmic reticulum membrane. Its subcellular location is the golgi apparatus membrane. The protein resides in the cytoplasm. It is found in the preautophagosomal structure membrane. With respect to regulation, rab activation is generally mediated by a guanine exchange factor (GEF), while inactivation through hydrolysis of bound GTP is catalyzed by a GTPase activating protein (GAP). YPT1 is activated by the GEFs DSS4 and TRAPP complex, and inactivated by GAPs GYP1, GYP5 and GYP8. Its function is as follows. The small GTPases Rab are key regulators of intracellular membrane trafficking, from the formation of transport vesicles to their fusion with membranes. Rabs cycle between an inactive GDP-bound form and an active GTP-bound form that is able to recruit to membranes different set of downstream effectors directly responsible for vesicle formation, movement, tethering and fusion. YPT1 regulates the trafficking of secretory vesicles from the endoplasmic reticulum (ER) to the Golgi. Vesicular transport depends on shuttling of YPT1 between membrane and cytosol by GDI1, probably by recycling it to its membrane of origin after a vesicle fusion event. Plays a role in the initial events of the autophagic vacuole development which take place at specialized regions of the endoplasmic reticulum. Also involved in the recycling of membrane proteins. The sequence is that of GTP-binding protein YPT1 (YPT1) from Saccharomyces cerevisiae (strain ATCC 204508 / S288c) (Baker's yeast).